The following is a 147-amino-acid chain: Protein AfaD (147 aa).

Positions 1–26 are cleaved as a signal peptide; it reads MNGSIRKMMRVTCGMLLMVMSGVSQA. The interval 91–111 is disordered; the sequence is RTGGDGWSPVKGEGGKGVSRP.

It to E.coli AggB.

The sequence is that of Protein AfaD (afaD) from Escherichia coli.